We begin with the raw amino-acid sequence, 355 residues long: Squamosa promoter-binding protein-like 15 (355 aa).

Residues methionine 1–glycine 27 are disordered. A compositionally biased stretch (low complexity) spans threonine 12–glycine 27. The SBP-type zinc-finger motif lies at threonine 61 to proline 138. The Zn(2+) site is built by cysteine 64, cysteine 69, cysteine 86, histidine 89, cysteine 105, cysteine 108, histidine 112, and cysteine 124. The short motif at lysine 121–lysine 137 is the Bipartite nuclear localization signal element.

The protein resides in the nucleus. Its function is as follows. Probable transcription factor required for the flowering response to vernalization in the shoot apical meristem (SAM). Defines the competence of shoot meristems to flower in response to vernalization in perennials. In Arabis alpina (Alpine rock-cress), this protein is Squamosa promoter-binding protein-like 15.